Here is a 336-residue protein sequence, read N- to C-terminus: METFCGFQKEEEQMDLPPGFRFHPTDEELITHYLHKKVLDTSFSAKAIGEVDLNKSEPWELPWMAKMGEKEWYFFCVRDRKYPTGLRTNRATEAGYWKATGKDKEIYRGKSLVGMKKTLVFYRGRAPKGQKTNWVMHEYRLEGKFSAHNLPKTAKNEWVICRVFQKSAGGKKIPISSLIRIGSLGTDFNPSLLPSLTDSSPYNDKTKTEPVYVPCFSNQTDQNQGTTLNCFSSPVLNSIQADIFHRIPLYQTQSLQVSMNLQSPVLTQEHSVLHAMIENNRRQSLKTMSVSQETGVSTDMNTDISSDFEFGKRRFDSQEDPSSSTGPVDLEPFWNY.

The NAC domain occupies 16–166; the sequence is LPPGFRFHPT…EWVICRVFQK (151 aa). Residues 113-172 mediate DNA binding; it reads VGMKKTLVFYRGRAPKGQKTNWVMHEYRLEGKFSAHNLPKTAKNEWVICRVFQKSAGGKK. Residues 313–336 form a disordered region; that stretch reads RRFDSQEDPSSSTGPVDLEPFWNY.

The protein resides in the nucleus. Functionally, binds to the promoter regions of genes involved in chlorophyll catabolic processes, such as NYC1, SGR1, SGR2 and PAO. In Arabidopsis thaliana (Mouse-ear cress), this protein is NAC domain-containing protein 100.